A 239-amino-acid polypeptide reads, in one-letter code: Ribosomal RNA small subunit methyltransferase G (239 aa).

S-adenosyl-L-methionine-binding positions include glycine 78, phenylalanine 83, alanine 129–glutamate 130, and arginine 148.

This sequence belongs to the methyltransferase superfamily. RNA methyltransferase RsmG family.

Its subcellular location is the cytoplasm. In terms of biological role, specifically methylates the N7 position of a guanine in 16S rRNA. This chain is Ribosomal RNA small subunit methyltransferase G, found in Clostridium perfringens (strain 13 / Type A).